The chain runs to 541 residues: 2-succinyl-5-enolpyruvyl-6-hydroxy-3-cyclohexene-1-carboxylate synthase (541 aa).

It belongs to the TPP enzyme family. MenD subfamily. In terms of assembly, homodimer. Requires Mg(2+) as cofactor. It depends on Mn(2+) as a cofactor. The cofactor is thiamine diphosphate.

It carries out the reaction isochorismate + 2-oxoglutarate + H(+) = 5-enolpyruvoyl-6-hydroxy-2-succinyl-cyclohex-3-ene-1-carboxylate + CO2. It participates in quinol/quinone metabolism; 1,4-dihydroxy-2-naphthoate biosynthesis; 1,4-dihydroxy-2-naphthoate from chorismate: step 2/7. The protein operates within quinol/quinone metabolism; menaquinone biosynthesis. Catalyzes the thiamine diphosphate-dependent decarboxylation of 2-oxoglutarate and the subsequent addition of the resulting succinic semialdehyde-thiamine pyrophosphate anion to isochorismate to yield 2-succinyl-5-enolpyruvyl-6-hydroxy-3-cyclohexene-1-carboxylate (SEPHCHC). This Rhodococcus opacus (strain B4) protein is 2-succinyl-5-enolpyruvyl-6-hydroxy-3-cyclohexene-1-carboxylate synthase.